The following is a 551-amino-acid chain: Cleavage and polyadenylation specificity factor subunit 6 (551 aa).

The interval 1–213 (MADGVDHIDI…RGRFPGAVPG (213 aa)) is necessary for interaction with NXF1. An RRM domain is found at 81–161 (IALYIGNLTW…QSPVVTPCNK (81 aa)). Residues 81–161 (IALYIGNLTW…QSPVVTPCNK (81 aa)) form a necessary for interaction with NUDT21/CPSF5 region. The interval 81–161 (IALYIGNLTW…QSPVVTPCNK (81 aa)) is necessary for nuclear paraspeckles localization. Threonine 157 bears the Phosphothreonine mark. Polar residues predominate over residues 169-180 (MQSRKTTQSGQM). Disordered stretches follow at residues 169–411 (MQSR…PLSE) and 477–551 (LHGI…YRHR). The segment covering 184–193 (GKAGPPGGGS) has biased composition (gly residues). Positions 202–206 (RGRGR) match the GAR motif. Positions 207-219 (FPGAVPGGDRFPG) are enriched in low complexity. Pro residues-rich tracts occupy residues 220-265 (PAGP…PLAG), 285-366 (GQPP…PPPT), and 377-388 (GPPPTDPYGRPP). A compositionally biased stretch (basic and acidic residues) spans 389 to 404 (PYDRGDYGPPGREMDT). 2 positions are modified to phosphothreonine: threonine 404 and threonine 407. Positions 404 to 551 (TARTPLSEAE…RDREREYRHR (148 aa)) are sufficient for nuclear speckle localization. The tract at residues 405-551 (ARTPLSEAEF…RDREREYRHR (147 aa)) is necessary for RNA-binding. The interval 481–551 (ESKSYGSGSR…RDREREYRHR (71 aa)) is necessary for interaction with SRSF3, SRSF7 and TRA2B/SFRS10. Residues 489–503 (SRRERSRERDHSRSR) are compositionally biased toward basic and acidic residues. The segment at 490-551 (RRERSRERDH…RDREREYRHR (62 aa)) is arg/Ser-rich domain. 5 positions are modified to phosphoserine: serine 494, serine 500, serine 511, serine 513, and serine 525. A compositionally biased stretch (basic residues) spans 504–514 (EKSRRHKSRSR). The tract at residues 510 to 551 (KSRSRDRHDDYYRERSRERERHRDRDRDRDRERDREREYRHR) is sufficient for nuclear targeting. Residues 515 to 551 (DRHDDYYRERSRERERHRDRDRDRDRERDREREYRHR) are compositionally biased toward basic and acidic residues.

Belongs to the RRM CPSF6/7 family. In terms of assembly, component of the cleavage factor Im (CFIm) complex which is a heterotetramer composed of two subunits of NUDT21/CPSF5 and two subunits of CPSF6 or CPSF7 or a heterodimer of CPSF6 and CPSF7. The cleavage factor Im (CFIm) complex associates with the CPSF and CSTF complexes to promote the assembly of the core mRNA 3'-processing machinery. Associates with the exon junction complex (EJC). Associates with the 80S ribosome particle. Interacts (via the RRM domain) with NUDT21/CPSF5; this interaction is direct and enhances binding to RNA. Interacts (via Arg/Ser-rich domain) with FIP1L1 (preferentially via unphosphorylated form and Arg/Glu/Asp-rich domain); this interaction mediates, at least in part, the interaction between the CFIm and CPSF complexes and may be inhibited by CPSF6 hyper-phosphorylation. Interacts (via N-terminus) with NXF1; this interaction is direct. Interacts with SRSF3. Interacts with SRSF7. Interacts with SNRNP70. Interacts with TRA2B/SFRS10. Interacts with UPF1. Interacts with UPF3B. Interacts with VIRMA. Interacts (via Arg/Ser-rich domain) with TNPO3; promoting nuclear import of CPSF6 independently of its phosphorylation status. Interacts with YTHDC1. Post-translationally, phosphorylated. Phosphorylated in the Arg/Ser-rich domain by SRPK1, in vitro. Symmetrically dimethylated on arginine residues by PRMT5 in a WDR77- and CLNS1A-dependent manner. Asymmetrically dimethylated on arginine residues by PRMT1. In terms of processing, symmetrically dimethylated on arginine residues in the GAR motif by PRMT5 in a WDR77- and CLNS1A-dependent manner. Asymmetrically dimethylated on arginine residues in the GAR motif by PRMT1. Expressed in testis. Expressed in male germ cells (at protein level).

It is found in the nucleus. Its subcellular location is the nucleoplasm. It localises to the nucleus speckle. The protein resides in the cytoplasm. Component of the cleavage factor Im (CFIm) complex that functions as an activator of the pre-mRNA 3'-end cleavage and polyadenylation processing required for the maturation of pre-mRNA into functional mRNAs. CFIm contributes to the recruitment of multiprotein complexes on specific sequences on the pre-mRNA 3'-end, so called cleavage and polyadenylation signals (pA signals). Most pre-mRNAs contain multiple pA signals, resulting in alternative cleavage and polyadenylation (APA) producing mRNAs with variable 3'-end formation. The CFIm complex acts as a key regulator of cleavage and polyadenylation site choice during APA through its binding to 5'-UGUA-3' elements localized in the 3'-untranslated region (UTR) for a huge number of pre-mRNAs. CPSF6 enhances NUDT21/CPSF5 binding to 5'-UGUA-3' elements localized upstream of pA signals and promotes RNA looping, and hence activates directly the mRNA 3'-processing machinery. Plays a role in mRNA export. This Mus musculus (Mouse) protein is Cleavage and polyadenylation specificity factor subunit 6.